We begin with the raw amino-acid sequence, 482 residues long: Adenylosuccinate lyase (482 aa).

Residues 14 to 15 (RY), 82 to 84 (RHD), and 108 to 109 (TS) each bind substrate. The active-site Proton donor/acceptor is the His-156. Gln-238 is a substrate binding site. Residue Ser-286 is the Proton donor/acceptor of the active site. The substrate site is built by Arg-300, Arg-326, Ser-331, and Arg-335.

This sequence belongs to the lyase 1 family. Adenylosuccinate lyase subfamily. Homotetramer. Residues from neighboring subunits contribute catalytic and substrate-binding residues to each active site.

The enzyme catalyses N(6)-(1,2-dicarboxyethyl)-AMP = fumarate + AMP. It carries out the reaction (2S)-2-[5-amino-1-(5-phospho-beta-D-ribosyl)imidazole-4-carboxamido]succinate = 5-amino-1-(5-phospho-beta-D-ribosyl)imidazole-4-carboxamide + fumarate. The protein operates within purine metabolism; AMP biosynthesis via de novo pathway; AMP from IMP: step 2/2. It participates in purine metabolism; IMP biosynthesis via de novo pathway; 5-amino-1-(5-phospho-D-ribosyl)imidazole-4-carboxamide from 5-amino-1-(5-phospho-D-ribosyl)imidazole-4-carboxylate: step 2/2. This is Adenylosuccinate lyase (ade8) from Schizosaccharomyces pombe (strain 972 / ATCC 24843) (Fission yeast).